A 590-amino-acid chain; its full sequence is Rho GTPase-activating protein 36 (590 aa).

Positions 214–414 (MSLNPIAQQI…AMIDNWDILF (201 aa)) constitute a Rho-GAP domain. The interval 526–590 (IPNNEDTDSD…KGKFATRFFP (65 aa)) is disordered.

In terms of assembly, may interacts (via the Rho-GAP domain) with the active form of RAC1.

GTPase activator for the Rho-type GTPases by converting them to an inactive GDP-bound state. This chain is Rho GTPase-activating protein 36 (Arhgap36), found in Mus musculus (Mouse).